Here is a 137-residue protein sequence, read N- to C-terminus: Global transcriptional regulator Spx (137 aa).

An intrachain disulfide couples C10 to C13.

Belongs to the ArsC family. Spx subfamily. In terms of assembly, interacts with the C-terminal domain of the alpha subunit of the RNAP.

It localises to the cytoplasm. Functionally, global transcriptional regulator that plays a key role in stress response and exerts either positive or negative regulation of genes. Acts by interacting with the C-terminal domain of the alpha subunit of the RNA polymerase (RNAP). This interaction can enhance binding of RNAP to the promoter region of target genes and stimulate their transcription, or block interaction of RNAP with activator. The sequence is that of Global transcriptional regulator Spx from Streptococcus agalactiae serotype III (strain NEM316).